A 561-amino-acid chain; its full sequence is Cloacin (561 aa).

Composition is skewed to gly residues over residues 1–21 (MSGG…GGQA), 29–40 (SGKGGPSSGGGT), and 66–91 (FGNG…GGGQ). 5 disordered regions span residues 1 to 93 (MSGG…GQSS), 254 to 273 (PKGI…TAGG), 304 to 326 (VKQR…PEEG), 432 to 507 (KAAL…KRAR), and 530 to 561 (RASD…KKYL). The segment at 1–180 (MSGGDGRGPG…DTVTETPAST (180 aa)) is involved in the translocation of the protein across the cell membrane. The tract at residues 200 to 420 (DERQHIAVVA…NAKLKAAQAS (221 aa)) is responsible for the receptor binding activity. Composition is skewed to basic and acidic residues over residues 306 to 326 (QRQE…PEEG) and 440 to 494 (ESRK…EGKP). Positions 421 to 561 (LNAMNDALSR…DPKRNIKKYL (141 aa)) are ribonuclease activity. The tract at residues 540 to 561 (FDPKTGKQVKGPDPKRNIKKYL) is binding of immunity protein.

This sequence belongs to the cloacin colicin family.

Its function is as follows. Inactivates ribosomes by hydrolyzing 16S RNA in 30S ribosomes at a specific site. In terms of biological role, colicins are polypeptide toxins produced by and active against E.coli and closely related bacteria. In Escherichia coli, this protein is Cloacin (ccl).